Here is a 132-residue protein sequence, read N- to C-terminus: Fatty acid-binding protein 9 (132 aa).

Ser-13, Ser-14, Ser-40, Ser-42, Ser-44, and Ser-91 each carry phosphoserine.

Belongs to the calycin superfamily. Fatty-acid binding protein (FABP) family. Testis.

It localises to the cytoplasm. This chain is Fatty acid-binding protein 9 (Fabp9), found in Mus musculus (Mouse).